The sequence spans 91 residues: Small ribosomal subunit protein uS17 (91 aa).

The protein belongs to the universal ribosomal protein uS17 family. In terms of assembly, part of the 30S ribosomal subunit.

Its function is as follows. One of the primary rRNA binding proteins, it binds specifically to the 5'-end of 16S ribosomal RNA. The protein is Small ribosomal subunit protein uS17 of Malacoplasma penetrans (strain HF-2) (Mycoplasma penetrans).